The following is a 181-amino-acid chain: MSTETLTLIKNSIKSIPDYPKAGIMFRDVTSLMEDPKAYQATIQSLVEKYKQGGFTKIVGTEARGFLFGAPLALELGVGFVPVRKPGKLPRPTIAQTYDLEYGTDTLEIHTDAIVEGDKVLVVDDLLATGGTIEATVKLIRQLGGEVEHAAFVINLPEIGGETRLEGLGLNVYSICEFAGH.

The protein belongs to the purine/pyrimidine phosphoribosyltransferase family. Homodimer.

The protein localises to the cytoplasm. It catalyses the reaction AMP + diphosphate = 5-phospho-alpha-D-ribose 1-diphosphate + adenine. The protein operates within purine metabolism; AMP biosynthesis via salvage pathway; AMP from adenine: step 1/1. Functionally, catalyzes a salvage reaction resulting in the formation of AMP, that is energically less costly than de novo synthesis. The polypeptide is Adenine phosphoribosyltransferase (Aliivibrio fischeri (strain ATCC 700601 / ES114) (Vibrio fischeri)).